A 698-amino-acid polypeptide reads, in one-letter code: Polyribonucleotide nucleotidyltransferase (698 aa).

Asp-488 and Asp-494 together coordinate Mg(2+). One can recognise a KH domain in the interval 555-614 (PRLLTIRIDPDKIRDVIGKGGATIRALTEETGTTIDISDDGKVTIASADKAAADEARRRI). The S1 motif domain maps to 624–692 (GTVYEGKVSK…RQGRIRLSMK (69 aa)).

This sequence belongs to the polyribonucleotide nucleotidyltransferase family. In terms of assembly, component of the RNA degradosome, which is a multiprotein complex involved in RNA processing and mRNA degradation. Mg(2+) is required as a cofactor.

The protein resides in the cytoplasm. It carries out the reaction RNA(n+1) + phosphate = RNA(n) + a ribonucleoside 5'-diphosphate. Its function is as follows. Involved in mRNA degradation. Catalyzes the phosphorolysis of single-stranded polyribonucleotides processively in the 3'- to 5'-direction. The polypeptide is Polyribonucleotide nucleotidyltransferase (Alkalilimnicola ehrlichii (strain ATCC BAA-1101 / DSM 17681 / MLHE-1)).